Consider the following 156-residue polypeptide: 6,7-dimethyl-8-ribityllumazine synthase (156 aa).

Residues F23, 57–59, and 81–83 each bind 5-amino-6-(D-ribitylamino)uracil; these read AYE and AII. 86-87 lines the (2S)-2-hydroxy-3-oxobutyl phosphate pocket; it reads GT. H89 serves as the catalytic Proton donor. Residue F114 participates in 5-amino-6-(D-ribitylamino)uracil binding. (2S)-2-hydroxy-3-oxobutyl phosphate is bound at residue R128.

It belongs to the DMRL synthase family.

It catalyses the reaction (2S)-2-hydroxy-3-oxobutyl phosphate + 5-amino-6-(D-ribitylamino)uracil = 6,7-dimethyl-8-(1-D-ribityl)lumazine + phosphate + 2 H2O + H(+). The protein operates within cofactor biosynthesis; riboflavin biosynthesis; riboflavin from 2-hydroxy-3-oxobutyl phosphate and 5-amino-6-(D-ribitylamino)uracil: step 1/2. Catalyzes the formation of 6,7-dimethyl-8-ribityllumazine by condensation of 5-amino-6-(D-ribitylamino)uracil with 3,4-dihydroxy-2-butanone 4-phosphate. This is the penultimate step in the biosynthesis of riboflavin. The polypeptide is 6,7-dimethyl-8-ribityllumazine synthase (Helicobacter pylori (strain G27)).